The chain runs to 182 residues: ATP synthase subunit delta (182 aa).

This sequence belongs to the ATPase delta chain family. In terms of assembly, F-type ATPases have 2 components, F(1) - the catalytic core - and F(0) - the membrane proton channel. F(1) has five subunits: alpha(3), beta(3), gamma(1), delta(1), epsilon(1). CF(0) has four main subunits: a(1), b(1), b'(1) and c(10-14). The alpha and beta chains form an alternating ring which encloses part of the gamma chain. F(1) is attached to F(0) by a central stalk formed by the gamma and epsilon chains, while a peripheral stalk is formed by the delta, b and b' chains.

Its subcellular location is the cellular thylakoid membrane. In terms of biological role, f(1)F(0) ATP synthase produces ATP from ADP in the presence of a proton or sodium gradient. F-type ATPases consist of two structural domains, F(1) containing the extramembraneous catalytic core and F(0) containing the membrane proton channel, linked together by a central stalk and a peripheral stalk. During catalysis, ATP synthesis in the catalytic domain of F(1) is coupled via a rotary mechanism of the central stalk subunits to proton translocation. Its function is as follows. This protein is part of the stalk that links CF(0) to CF(1). It either transmits conformational changes from CF(0) to CF(1) or is implicated in proton conduction. The protein is ATP synthase subunit delta of Synechococcus sp. (strain CC9902).